The primary structure comprises 68 residues: Large ribosomal subunit protein uL29 (68 aa).

Belongs to the universal ribosomal protein uL29 family.

The protein is Large ribosomal subunit protein uL29 of Streptococcus suis (strain 98HAH33).